Reading from the N-terminus, the 1273-residue chain is DNA gyrase subunit A (1273 aa).

The Topo IIA-type catalytic domain occupies 42–931 (LPEVRDGLKP…VDGDVNDEDL (890 aa)). The active-site O-(5'-phospho-DNA)-tyrosine intermediate is tyrosine 130. Residues 256–396 (LFGAFISGGF…VQQMLLEFGV (141 aa)) enclose the DOD-type homing endonuclease domain. The short motif at 958 to 964 (QKRGGKG) is the GyrA-box element.

The protein belongs to the type II topoisomerase GyrA/ParC subunit family. Heterotetramer, composed of two GyrA and two GyrB chains. In the heterotetramer, GyrA contains the active site tyrosine that forms a transient covalent intermediate with the DNA, while GyrB binds cofactors catalyzes ATP hydrolysis. Post-translationally, this protein undergoes a protein self splicing that involves a post-translational excision of the intervening region (intein) followed by peptide ligation.

Its subcellular location is the cytoplasm. The enzyme catalyses ATP-dependent breakage, passage and rejoining of double-stranded DNA.. DNA supercoiling is inhibited by fluoroquinolones; IC(50) 1 ug/ml for sitafloxacin. Its function is as follows. A type II topoisomerase that negatively supercoils closed circular double-stranded (ds) DNA in an ATP-dependent manner to modulate DNA topology and maintain chromosomes in an underwound state. Negative supercoiling favors strand separation, and DNA replication, transcription, recombination and repair, all of which involve strand separation. Also able to catalyze the interconversion of other topological isomers of dsDNA rings, including catenanes and knotted rings. Type II topoisomerases break and join 2 DNA strands simultaneously in an ATP-dependent manner. This is DNA gyrase subunit A from Mycobacterium leprae (strain TN).